A 561-amino-acid chain; its full sequence is Glucose-6-phosphate isomerase (561 aa).

Residues 171–172, 222–227, Q366, E370, H401, and K525 contribute to the D-glucose 6-phosphate site; these read GS and SKTFTT. E370 functions as the Proton donor in the catalytic mechanism. Active-site residues include H401 and K525.

This sequence belongs to the GPI family. As to quaternary structure, homodimer.

It localises to the cytoplasm. It is found in the cytosol. The enzyme catalyses alpha-D-glucose 6-phosphate = beta-D-fructose 6-phosphate. The protein operates within carbohydrate degradation; glycolysis; D-glyceraldehyde 3-phosphate and glycerone phosphate from D-glucose: step 2/4. In the cytoplasm, catalyzes the conversion of glucose-6-phosphate to fructose-6-phosphate, the second step in glycolysis, and the reverse reaction during gluconeogenesis. This Neurospora crassa (strain ATCC 24698 / 74-OR23-1A / CBS 708.71 / DSM 1257 / FGSC 987) protein is Glucose-6-phosphate isomerase (pgi-1).